Reading from the N-terminus, the 185-residue chain is Regulatory protein RecX (185 aa).

It belongs to the RecX family.

It localises to the cytoplasm. Modulates RecA activity. This Thermobifida fusca (strain YX) protein is Regulatory protein RecX.